A 279-amino-acid polypeptide reads, in one-letter code: Large ribosomal subunit protein mL46 (279 aa).

Position 230 is an N6-acetyllysine (Lys230).

The protein belongs to the mitochondrion-specific ribosomal protein mL46 family. Component of the mitochondrial large ribosomal subunit (mt-LSU). Mature mammalian 55S mitochondrial ribosomes consist of a small (28S) and a large (39S) subunit. The 28S small subunit contains a 12S ribosomal RNA (12S mt-rRNA) and 30 different proteins. The 39S large subunit contains a 16S rRNA (16S mt-rRNA), a copy of mitochondrial valine transfer RNA (mt-tRNA(Val)), which plays an integral structural role, and 52 different proteins. mL46 is located at the central protuberance.

The protein resides in the mitochondrion. The chain is Large ribosomal subunit protein mL46 (MRPL46) from Homo sapiens (Human).